A 144-amino-acid chain; its full sequence is Probable subtilase-type protease inhibitor (144 aa).

The first 34 residues, 1–34 (MPNTARWAVTLTLTATAVCGPLAGASLATPNAAA), serve as a signal peptide directing secretion. 2 disulfides stabilise this stretch: cysteine 66-cysteine 81 and cysteine 102-cysteine 132.

This sequence belongs to the protease inhibitor I16 (SSI) family. As to quaternary structure, homodimer.

The protein localises to the secreted. Functionally, strong inhibitor of bacterial serine proteases such as subtilisin. In Streptomyces avermitilis (strain ATCC 31267 / DSM 46492 / JCM 5070 / NBRC 14893 / NCIMB 12804 / NRRL 8165 / MA-4680), this protein is Probable subtilase-type protease inhibitor (sti1).